The sequence spans 226 residues: PKHD-type hydroxylase PSPA7_5129 (226 aa).

In terms of domain architecture, Fe2OG dioxygenase spans Lys78–Ser178. Positions 96, 98, and 159 each coordinate Fe cation. Arg169 contacts 2-oxoglutarate.

The cofactor is Fe(2+). L-ascorbate is required as a cofactor.

This chain is PKHD-type hydroxylase PSPA7_5129, found in Pseudomonas paraeruginosa (strain DSM 24068 / PA7) (Pseudomonas aeruginosa (strain PA7)).